Here is a 284-residue protein sequence, read N- to C-terminus: 2-dehydro-3-deoxyphosphooctonate aldolase (284 aa).

The protein belongs to the KdsA family.

Its subcellular location is the cytoplasm. It carries out the reaction D-arabinose 5-phosphate + phosphoenolpyruvate + H2O = 3-deoxy-alpha-D-manno-2-octulosonate-8-phosphate + phosphate. Its pathway is carbohydrate biosynthesis; 3-deoxy-D-manno-octulosonate biosynthesis; 3-deoxy-D-manno-octulosonate from D-ribulose 5-phosphate: step 2/3. It functions in the pathway bacterial outer membrane biogenesis; lipopolysaccharide biosynthesis. The chain is 2-dehydro-3-deoxyphosphooctonate aldolase from Cronobacter sakazakii (strain ATCC BAA-894) (Enterobacter sakazakii).